Here is a 166-residue protein sequence, read N- to C-terminus: Large ribosomal subunit protein uL10 (166 aa).

The protein belongs to the universal ribosomal protein uL10 family. Part of the ribosomal stalk of the 50S ribosomal subunit. The N-terminus interacts with L11 and the large rRNA to form the base of the stalk. The C-terminus forms an elongated spine to which L12 dimers bind in a sequential fashion forming a multimeric L10(L12)X complex.

Functionally, forms part of the ribosomal stalk, playing a central role in the interaction of the ribosome with GTP-bound translation factors. The chain is Large ribosomal subunit protein uL10 from Neisseria gonorrhoeae (strain ATCC 700825 / FA 1090).